The chain runs to 600 residues: Transcription factor rlmA (600 aa).

The MADS-box domain maps to 1 to 61 (MGRRKIEIKA…KKLYEFSSCD (61 aa)). 2 disordered regions span residues 71–518 (YYGP…NIET) and 544–600 (GFGR…KSKT). Residues 75–89 (PHEHKGPEDFNGKRD) are compositionally biased toward basic and acidic residues. Positions 151 to 160 (PQPQGASRPS) are enriched in polar residues. Residues 222-242 (QPLPPHAIPPHPMPQPVPPHH) are compositionally biased toward pro residues. Over residues 243–260 (QAPQHLPQHPHPLAQQTP) the composition is skewed to low complexity. Over residues 328 to 339 (HQRSLSSKSRSI) the composition is skewed to polar residues. Residues 364–384 (PRTESADVKAEAKQNDSKEIK) show a composition bias toward basic and acidic residues. Residues 386–397 (PAQPVAPPPPPR) show a composition bias toward pro residues. Residues 440–452 (RGSATADSSSSTG) show a composition bias toward low complexity. The span at 453–468 (NQTVTPAKANPDTNHS) shows a compositional bias: polar residues. Over residues 490–501 (PPNPFARPPPPG) the composition is skewed to pro residues. Over residues 503–515 (ASQNSNAYNSNNN) the composition is skewed to low complexity.

This sequence belongs to the MEF2 family. Interacts with hsp90. Post-translationally, phosphorylation during asexual development.

It is found in the nucleus. Functionally, transcription factor; part of cell wall integrity (CWI) signaling pathway composed of pkcA, the bck1-mkk2-mpka MAPK cascade and the downstream rlmA transcription regulator. The CWI signaling pathway regulates cell wall integrity and pyomelanin formation. CWI also controls oxidative stress response, gliotoxin production, iron adaptation and asexual development. Finally, CWI is constitutively required for A.fumigatus to cope with the temperature increase found in the mammalian lung environment, during infection. Positively regulates the phosphorylation of mpkA. Involved in tolerance to oxidative damage and transcriptional regulation of genes related to oxidative stress adaptation. Directly regulates the expression of regulators of conidiation, including flbB, flbC, brlA, abaA, and rasB, as well as genes involved in cell wall synthesis and remodeling. Specifically associates with the target fumiquinazoline (fmq) cluster genes promoters at conserved motifs (5'-TAWWWWTA-3') during conidiation to supplement mature conidia with fumiquinazoline C. Also controls the DHN-melanin production via binding the promoter of pksP. This chain is Transcription factor rlmA, found in Aspergillus fumigatus (strain ATCC MYA-4609 / CBS 101355 / FGSC A1100 / Af293) (Neosartorya fumigata).